Here is a 662-residue protein sequence, read N- to C-terminus: DNA topoisomerase 4 subunit B (662 aa).

ATP-binding positions include tyrosine 20, asparagine 60, aspartate 87, 129-135 (GLHGVGI), and lysine 359. The region spanning 439 to 553 (TELFIVEGDS…EGHLYLAKPP (115 aa)) is the Toprim domain. Mg(2+) is bound by residues glutamate 445, aspartate 518, and aspartate 520.

Belongs to the type II topoisomerase family. ParE type 1 subfamily. As to quaternary structure, heterotetramer composed of ParC and ParE. It depends on Mg(2+) as a cofactor. The cofactor is Mn(2+). Ca(2+) serves as cofactor.

The catalysed reaction is ATP-dependent breakage, passage and rejoining of double-stranded DNA.. Functionally, topoisomerase IV is essential for chromosome segregation. It relaxes supercoiled DNA. Performs the decatenation events required during the replication of a circular DNA molecule. The polypeptide is DNA topoisomerase 4 subunit B (Rickettsia felis (strain ATCC VR-1525 / URRWXCal2) (Rickettsia azadi)).